A 455-amino-acid chain; its full sequence is Folate transporter 2 (455 aa).

8 consecutive transmembrane segments (helical) span residues 42–64 (IVVY…IYYL), 84–103 (YIPF…FSIF), 110–131 (YLFL…LNLS), 137–157 (LILF…EALV), 177–195 (IASK…GYFL), 201–221 (EYIF…CLFL), 242–261 (FINT…YMSG), and 281–301 (SFMG…IIIY). Asn-307 carries an N-linked (GlcNAc...) asparagine glycan. A run of 2 helical transmembrane segments spans residues 313–331 (TLII…PIIL) and 347–367 (VLSG…PLFI). Asn-416 is a glycosylation site (N-linked (GlcNAc...) asparagine). The helical transmembrane segment at 417 to 438 (LSLYILTCGFFLLFSLTLVPLL) threads the bilayer.

Belongs to the major facilitator superfamily. Folate-biopterin transporter (TC 2.A.71) family.

The protein localises to the cell membrane. The catalysed reaction is folate(in) + H(+)(in) = folate(out) + H(+)(out). It catalyses the reaction (6S)-5-methyl-5,6,7,8-tetrahydrofolate(in) + H(+)(in) = (6S)-5-methyl-5,6,7,8-tetrahydrofolate(out) + H(+)(out). Transport of folates is inhibited by probenecid and methotrexate. Folate transporter with broad substrate specificity. Transports folic acid, folinic acid, pteroic acid, dihydropteroic acid, the folate precursor p-amino benzoic acid (pABA) and the human folate catabolite pABA monoglutamate. Can transport 5-methyltetrahydrofolate with low efficiency. In Plasmodium falciparum (isolate 3D7), this protein is Folate transporter 2.